The primary structure comprises 402 residues: Plasminogen activator inhibitor 1 (402 aa).

A signal peptide spans 1–23; the sequence is MQMSPALTCLVLGLALVFGEGSA. Residues N232, N288, and N352 are each glycosylated (N-linked (GlcNAc...) asparagine).

The protein belongs to the serpin family. As to quaternary structure, forms a heterodimer with TMPRSS7. Interacts with VTN. Binds LRP1B; binding is followed by internalization and degradation. Interacts with PPP1CB. In complex with PLAU/uPA, interacts with PLAUR/uPAR. Interacts with SORL1 and LRP1, either alone or in complex with PLAU; these interactions are abolished in the presence of LRPAP1/RAP. The ternary complex composed of PLAUR-PLAU-PAI1 also interacts with SORL1. Interacts with PLAT/tPA. Also interacts with SORL1, when complexed to PLAT/tPA. Inactivated by proteolytic attack of the urokinase-type (u-PA) and the tissue-type (TPA), cleaving the 369-Arg-|-Met-370 bond. Expressed in endothelial cells. Found in plasma, platelets, and hepatoma and fibrosarcoma cells.

It is found in the secreted. Its function is as follows. Serine protease inhibitor. Inhibits TMPRSS7. Is a primary inhibitor of tissue-type plasminogen activator (PLAT) and urokinase-type plasminogen activator (PLAU). As PLAT inhibitor, it is required for fibrinolysis down-regulation and is responsible for the controlled degradation of blood clots. As PLAU inhibitor, it is involved in the regulation of cell adhesion and spreading. Acts as a regulator of cell migration, independently of its role as protease inhibitor. It is required for stimulation of keratinocyte migration during cutaneous injury repair. It is involved in cellular and replicative senescence. Plays a role in alveolar type 2 cells senescence in the lung. Is involved in the regulation of cementogenic differentiation of periodontal ligament stem cells, and regulates odontoblast differentiation and dentin formation during odontogenesis. This is Plasminogen activator inhibitor 1 (SERPINE1) from Homo sapiens (Human).